The sequence spans 1482 residues: Type VII secretion system protein EssC (1482 aa).

Topologically, residues 1–229 (MHKLIIKYNK…RPPQPIQKNN (229 aa)) are cytoplasmic. Residues 230–252 (TVIWRSIIPPLVMIALTVVIFLV) form a helical membrane-spanning segment. Topologically, residues 253–256 (RPIG) are extracellular. Residues 257–279 (IYILMMIGMSTVTIVFGITTYFS) traverse the membrane as a helical segment. Over 280-1482 (EKKKYNKDVE…EYQKIKLMEG (1203 aa)) the chain is Cytoplasmic. FtsK domains follow at residues 652–846 (DDIL…QDSN) and 997–1183 (QGPM…NELT). ATP-binding positions include 672–679 (GTTGSGKS) and 1014–1021 (GSPGYGRT).

Belongs to the EssC family. As to quaternary structure, homooligomer. Interacts with EsaE.

Its subcellular location is the cell membrane. Functionally, component of the type VII secretion system (Ess). Required for the secretion of substrates including EsxA and EsxB. However, unable to support secretion of the substrate protein EsxC. The polypeptide is Type VII secretion system protein EssC (Staphylococcus aureus (strain MRSA252)).